We begin with the raw amino-acid sequence, 215 residues long: Imidazole glycerol phosphate synthase subunit HisH (215 aa).

A Glutamine amidotransferase type-1 domain is found at 9–215; it reads EVVLVDYGLG…QNFVDYCLER (207 aa). The active-site Nucleophile is C85. Residues H193 and E195 contribute to the active site.

In terms of assembly, heterodimer of HisH and HisF.

It is found in the cytoplasm. The enzyme catalyses 5-[(5-phospho-1-deoxy-D-ribulos-1-ylimino)methylamino]-1-(5-phospho-beta-D-ribosyl)imidazole-4-carboxamide + L-glutamine = D-erythro-1-(imidazol-4-yl)glycerol 3-phosphate + 5-amino-1-(5-phospho-beta-D-ribosyl)imidazole-4-carboxamide + L-glutamate + H(+). It catalyses the reaction L-glutamine + H2O = L-glutamate + NH4(+). It functions in the pathway amino-acid biosynthesis; L-histidine biosynthesis; L-histidine from 5-phospho-alpha-D-ribose 1-diphosphate: step 5/9. Functionally, IGPS catalyzes the conversion of PRFAR and glutamine to IGP, AICAR and glutamate. The HisH subunit catalyzes the hydrolysis of glutamine to glutamate and ammonia as part of the synthesis of IGP and AICAR. The resulting ammonia molecule is channeled to the active site of HisF. This chain is Imidazole glycerol phosphate synthase subunit HisH, found in Natronomonas pharaonis (strain ATCC 35678 / DSM 2160 / CIP 103997 / JCM 8858 / NBRC 14720 / NCIMB 2260 / Gabara) (Halobacterium pharaonis).